The following is a 460-amino-acid chain: uncharacterized protein (460 aa).

A signal peptide (tat-type signal) is located at residues 1–33; sequence MKESNSRREFLSQSGKMVTAAALFGTSVPLAHA.

This sequence belongs to the metallo-dependent hydrolases superfamily. In terms of processing, exported by the Tat system. The position of the signal peptide cleavage has not been experimentally proven. Can also be exported by the Sec system.

This is an uncharacterized protein from Escherichia coli (strain K12).